Consider the following 218-residue polypeptide: Serine/threonine-protein phosphatase 2 (218 aa).

Mn(2+) is bound by residues aspartate 22, histidine 24, aspartate 51, and asparagine 77. Histidine 78 serves as the catalytic Proton donor. Histidine 187 contributes to the Mn(2+) binding site.

It belongs to the PPP phosphatase family. PP-1 subfamily. Mn(2+) serves as cofactor.

It catalyses the reaction O-phospho-L-seryl-[protein] + H2O = L-seryl-[protein] + phosphate. The catalysed reaction is O-phospho-L-threonyl-[protein] + H2O = L-threonyl-[protein] + phosphate. With respect to regulation, inhibited by cadmium, copper, zinc when added activity but with less efficiency. Its function is as follows. Can hydrolyze phosphorylated Ser-, Thr- or Tyr-substrates in vitro. The natural substrate is unknown. This is Serine/threonine-protein phosphatase 2 (pphB) from Salmonella typhimurium (strain LT2 / SGSC1412 / ATCC 700720).